Here is a 328-residue protein sequence, read N- to C-terminus: Glucokinase (328 aa).

Residue 16 to 21 (ADIGGT) coordinates ATP.

The protein belongs to the bacterial glucokinase family.

The protein localises to the cytoplasm. It carries out the reaction D-glucose + ATP = D-glucose 6-phosphate + ADP + H(+). This is Glucokinase from Neisseria gonorrhoeae (strain ATCC 700825 / FA 1090).